The primary structure comprises 194 residues: Yellow fluorescent protein (194 aa).

Lumazine-binding repeat units lie at residues 1–98 and 99–194; these read MFKG…SGGH and ILSA…NQCW. 179-183 serves as a coordination point for FMN; it reads KVNVE.

In terms of assembly, homodimer. The cofactor is FMN.

In terms of biological role, antenna protein that modulates the color of the bioluminescence emission of the luciferase. In the presence of YFP and only at temperatures below 20 degrees Celsius, luciferase exhibits a bimodal emission spectrum with a new peak at 545 nM (yellow), in addition to the one at 485 nM. The sequence is that of Yellow fluorescent protein (luxY) from Aliivibrio fischeri (Vibrio fischeri).